The following is a 263-amino-acid chain: MFRNQYDNDVTVWSPQGRIHQIEYAMEAVKQGSATVGLKSKTHAVLVALKRAQSELAAHQKKILHVDNHIGISIAGLTADARLLCNFMRQECLDSRFVFDRPLPVSRLVSLIGSKTQIPTQRYGRRPYGVGLLIAGYDDMGPHIFQTCPSANYFDCRAMSIGARSQSARTYLERHMSEFMECNLNELVKHGLRALRETLPAEQDLTTKNVSIGIVGKDLEFTIYDDDDVSPFLEGLEERPQRKAQPAQPADEPAEKADEPMEH.

Methionine 1 bears the N-acetylmethionine mark. Serine 110 is modified (phosphoserine; alternate). Serine 110 is a glycosylation site (O-linked (GlcNAc) serine; alternate). Residue lysine 115 forms a Glycyl lysine isopeptide (Lys-Gly) (interchain with G-Cter in ubiquitin) linkage. Serine 177 carries the post-translational modification Phosphoserine. Lysine 208 is covalently cross-linked (Glycyl lysine isopeptide (Lys-Gly) (interchain with G-Cter in ubiquitin)). Positions 232-263 (FLEGLEERPQRKAQPAQPADEPAEKADEPMEH) are disordered. Positions 253–263 (PAEKADEPMEH) are enriched in basic and acidic residues.

This sequence belongs to the peptidase T1A family. The 26S proteasome consists of a 20S proteasome core and two 19S regulatory subunits. The 20S proteasome core is a barrel-shaped complex made of 28 subunits that are arranged in four stacked rings. The two outer rings are each formed by seven alpha subunits, and the two inner rings are formed by seven beta subunits. The proteolytic activity is exerted by three beta-subunits PSMB5, PSMB6 and PSMB7. Interacts with NOTCH3. Interacts with ZFAND1.

The protein localises to the cytoplasm. It is found in the nucleus. In terms of biological role, component of the 20S core proteasome complex involved in the proteolytic degradation of most intracellular proteins. This complex plays numerous essential roles within the cell by associating with different regulatory particles. Associated with two 19S regulatory particles, forms the 26S proteasome and thus participates in the ATP-dependent degradation of ubiquitinated proteins. The 26S proteasome plays a key role in the maintenance of protein homeostasis by removing misfolded or damaged proteins that could impair cellular functions, and by removing proteins whose functions are no longer required. Associated with the PA200 or PA28, the 20S proteasome mediates ubiquitin-independent protein degradation. This type of proteolysis is required in several pathways including spermatogenesis (20S-PA200 complex) or generation of a subset of MHC class I-presented antigenic peptides (20S-PA28 complex). The polypeptide is Proteasome subunit alpha type-1 (Homo sapiens (Human)).